The chain runs to 195 residues: Nuclear transcription factor Y subunit C-10 (195 aa).

Positions 1-24 are disordered; it reads MRRPKSSHVRMEPVAPRSHNTMPM.

It belongs to the NFYC/HAP5 subunit family. Heterotrimeric transcription factor composed of three components, NF-YA, NF-YB and NF-YC. NF-YB and NF-YC must interact and dimerize for NF-YA association and DNA binding.

It localises to the nucleus. Stimulates the transcription of various genes by recognizing and binding to a CCAAT motif in promoters. In Arabidopsis thaliana (Mouse-ear cress), this protein is Nuclear transcription factor Y subunit C-10 (NFYC10).